Consider the following 143-residue polypeptide: Class II hydrophobin qid3 (143 aa).

The signal sequence occupies residues 1–17 (MKFLTVAAVFFTAVLAA). The span at 20 to 37 (NYPPPPPPTYAPPPPTYT) shows a compositional bias: pro residues. Residues 20–67 (NYPPPPPPTYAPPPPTYTLPPNGNGGGNGNGNGNGNGGGNGNGNGNTN) form a disordered region. 10 tandem repeats follow at residues 41–42 (NG), 43–44 (NG), 47–48 (NG), 49–50 (NG), 51–52 (NG), 53–54 (NG), 55–56 (NG), 59–60 (NG), 61–62 (NG), and 63–64 (NG). A 10 X 2 AA repeats of N-G region spans residues 41–64 (NGNGGGNGNGNGNGNGGGNGNGNG). Positions 42 to 63 (GNGGGNGNGNGNGNGGGNGNGN) are enriched in gly residues. Cystine bridges form between C74–C124, C85–C97, and C125–C136.

It belongs to the cerato-ulmin hydrophobin family. Homotetramer. Further self-assembles to form highly ordered films at water-air interfaces through intermolecular interactions.

It is found in the secreted. The protein localises to the cell wall. In terms of biological role, aerial growth, conidiation, and dispersal of filamentous fungi in the environment rely upon a capability of their secreting small amphipathic proteins called hydrophobins (HPBs) with low sequence identity. Class I can self-assemble into an outermost layer of rodlet bundles on aerial cell surfaces, conferring cellular hydrophobicity that supports fungal growth, development and dispersal; whereas Class II form highly ordered films at water-air interfaces through intermolecular interactions but contribute nothing to the rodlet structure. Qid3 is a class II hydrophobin that might acts as a chitinase inhibitor at the cell surface that blocks the degradation of the chitin rings localized in the budding region of dividing cells. In Trichoderma harzianum (Hypocrea lixii), this protein is Class II hydrophobin qid3.